The following is a 358-amino-acid chain: Probable D-xylulose reductase A (358 aa).

The Zn(2+) site is built by Cys-47, His-72, and Glu-73. Residue 182 to 187 (GAGPVG) participates in NAD(+) binding.

This sequence belongs to the zinc-containing alcohol dehydrogenase family. The cofactor is Zn(2+).

The enzyme catalyses xylitol + NAD(+) = D-xylulose + NADH + H(+). The protein operates within carbohydrate degradation; L-arabinose degradation via L-arabinitol; D-xylulose 5-phosphate from L-arabinose (fungal route): step 4/5. Functionally, xylitol dehydrogenase which catalyzes the conversion of xylitol to D-xylulose. Xylose is a major component of hemicelluloses such as xylan. Most fungi utilize D-xylose via three enzymatic reactions, xylose reductase (XR), xylitol dehydrogenase (XDH), and xylulokinase, to form xylulose 5-phosphate, which enters pentose phosphate pathway. The sequence is that of Probable D-xylulose reductase A (xdhA) from Aspergillus niger (strain ATCC MYA-4892 / CBS 513.88 / FGSC A1513).